The following is a 127-amino-acid chain: Large ribosomal subunit protein bL17 (127 aa).

This sequence belongs to the bacterial ribosomal protein bL17 family. In terms of assembly, part of the 50S ribosomal subunit. Contacts protein L32.

The polypeptide is Large ribosomal subunit protein bL17 (Legionella pneumophila (strain Paris)).